A 296-amino-acid polypeptide reads, in one-letter code: Developmental pluripotency-associated protein 4 (296 aa).

The span at 1-13 (METAGDKKWSAEE) shows a compositional bias: basic and acidic residues. A disordered region spans residues 1 to 73 (METAGDKKWS…QTRRKVPIPP (73 aa)). Low complexity predominate over residues 23 to 34 (SSQPSTAPAKAK). A compositionally biased stretch (basic and acidic residues) spans 42-58 (KSETDNGCKPKEGKPQD).

In terms of assembly, interacts with DPPA2. Interacts with PCGF1. Expressed in pluripotent embryonic cells, but not in differentiated somatic tissues.

Its subcellular location is the nucleus. In terms of biological role, may be involved in the maintenance of active epigenetic status of target genes. May inhibit differentiation of embryonic stem (ES) cells into a primitive ectoderm lineage. In Mus musculus (Mouse), this protein is Developmental pluripotency-associated protein 4 (Dppa4).